The primary structure comprises 233 residues: Probable RNA 2'-phosphotransferase (233 aa).

The protein belongs to the KptA/TPT1 family.

Removes the 2'-phosphate from RNA via an intermediate in which the phosphate is ADP-ribosylated by NAD followed by a presumed transesterification to release the RNA and generate ADP-ribose 1''-2''-cyclic phosphate (APPR&gt;P). May function as an ADP-ribosylase. The polypeptide is Probable RNA 2'-phosphotransferase (Hyperthermus butylicus (strain DSM 5456 / JCM 9403 / PLM1-5)).